The primary structure comprises 1097 residues: DNA-directed RNA polymerase subunit beta (1097 aa).

The interval glutamine 1072–aspartate 1097 is disordered.

This sequence belongs to the RNA polymerase beta chain family. As to quaternary structure, in cyanobacteria the RNAP catalytic core is composed of 2 alpha, 1 beta, 1 beta', 1 gamma and 1 omega subunit. When a sigma factor is associated with the core the holoenzyme is formed, which can initiate transcription.

The enzyme catalyses RNA(n) + a ribonucleoside 5'-triphosphate = RNA(n+1) + diphosphate. Its function is as follows. DNA-dependent RNA polymerase catalyzes the transcription of DNA into RNA using the four ribonucleoside triphosphates as substrates. This is DNA-directed RNA polymerase subunit beta from Synechococcus sp. (strain CC9902).